Here is a 344-residue protein sequence, read N- to C-terminus: Plastoglobule-localized metallopeptidase 48, chloroplastic (344 aa).

The transit peptide at 1 to 47 (MAVSVSAPVLSLCYNQSGELSRSLGYRLPKKVGFSSGRRSVSYIGFG) directs the protein to the chloroplast. 2 helical membrane passes run 102–122 (LLGS…SVLV) and 169–189 (FIVV…QAVL). His191 serves as a coordination point for Zn(2+). The active site involves Glu192. Zn(2+) is bound at residue His195. A helical transmembrane segment spans residues 201–221 (GVWLTFANILTLGAYTVPAFG). Glu240 serves as a coordination point for Zn(2+). A helical transmembrane segment spans residues 256-272 (VVVSVLMKLAGGCPSIA).

Belongs to the peptidase M48 family. M48D subfamily. In terms of assembly, interacts with plastoglobule (PG) core proteins ABC1K3, PES1 and CCD4. Zn(2+) is required as a cofactor. Mostly expressed in flowers (e.g. sepals, petals and stamen), seeds, leaves and cotyledons.

Its subcellular location is the plastid. It is found in the chloroplast. The protein localises to the plastoglobule. The protein resides in the chloroplast membrane. Its function is as follows. Metalloendopeptidase with a Zn-dependent proteolytic activity and substrate cleavage upstream of hydrophobic residues. Positive regulator of senescence, probably by degrading CCD4, thus participating in the controlled removal of carotenoids from the thylakoid membrane during the senescence process. The sequence is that of Plastoglobule-localized metallopeptidase 48, chloroplastic from Arabidopsis thaliana (Mouse-ear cress).